The sequence spans 301 residues: Cytochrome c biogenesis protein CcsA (301 aa).

Transmembrane regions (helical) follow at residues 13–33 (NNIT…GLIF), 39–59 (VFYI…IILG), 73–93 (LYES…YLEY), 97–117 (LYLI…FSTL), 146–166 (MLSY…LVLI), 209–229 (TIGF…VWAN), 236–256 (WSWD…AAYL), and 270–290 (AYLA…VNFL).

The protein belongs to the CcmF/CycK/Ccl1/NrfE/CcsA family. In terms of assembly, may interact with Ccs1.

Its subcellular location is the plastid. It localises to the chloroplast thylakoid membrane. Its function is as follows. Required during biogenesis of c-type cytochromes (cytochrome c6 and cytochrome f) at the step of heme attachment. This Guillardia theta (Cryptophyte) protein is Cytochrome c biogenesis protein CcsA.